A 136-amino-acid chain; its full sequence is Heavy metal-associated isoprenylated plant protein 19 (136 aa).

The region spanning 13-77 is the HMA domain; the sequence is YMDVEFNVSM…LKKKTGKRVK (65 aa). A metal cation is bound by residues cysteine 24 and cysteine 27. Cysteine 133 carries the post-translational modification Cysteine methyl ester. The S-farnesyl cysteine moiety is linked to residue cysteine 133. Residues 134–136 constitute a propeptide, removed in mature form; sequence SIS.

It belongs to the HIPP family.

Functionally, heavy-metal-binding protein. In Arabidopsis thaliana (Mouse-ear cress), this protein is Heavy metal-associated isoprenylated plant protein 19.